Reading from the N-terminus, the 238-residue chain is Ribonuclease PH (238 aa).

Phosphate is bound by residues Arg86 and 124 to 126 (GTR).

The protein belongs to the RNase PH family. In terms of assembly, homohexameric ring arranged as a trimer of dimers.

The enzyme catalyses tRNA(n+1) + phosphate = tRNA(n) + a ribonucleoside 5'-diphosphate. Functionally, phosphorolytic 3'-5' exoribonuclease that plays an important role in tRNA 3'-end maturation. Removes nucleotide residues following the 3'-CCA terminus of tRNAs; can also add nucleotides to the ends of RNA molecules by using nucleoside diphosphates as substrates, but this may not be physiologically important. Probably plays a role in initiation of 16S rRNA degradation (leading to ribosome degradation) during starvation. This chain is Ribonuclease PH, found in Proteus mirabilis (strain HI4320).